The primary structure comprises 326 residues: DnaJ homolog subfamily B member 6 (326 aa).

The J domain occupies 3–69 (DYYEVLGVQK…KKRDIYDRFG (67 aa)). Residues 249–326 (ALPFQPTNTR…KKKKSTKGSY (78 aa)) form a disordered region. The residue at position 277 (serine 277) is a Phosphoserine.

As to quaternary structure, homooligomer.

It is found in the cytoplasm. The protein localises to the perinuclear region. Its subcellular location is the nucleus. Has a stimulatory effect on the ATPase activity of HSP70 in a dose-dependent and time-dependent manner and hence acts as a co-chaperone of HSP70. Plays an indispensable role in the organization of KRT8/KRT18 filaments. Acts as an endogenous molecular chaperone for neuronal proteins including huntingtin. Suppresses aggregation and toxicity of polyglutamine-containing, aggregation-prone proteins. Also reduces cellular toxicity and caspase-3 activity. This is DnaJ homolog subfamily B member 6 from Gallus gallus (Chicken).